Reading from the N-terminus, the 238-residue chain is Ribonuclease PH (238 aa).

Residues arginine 86 and 124 to 126 (GTR) each bind phosphate.

The protein belongs to the RNase PH family. As to quaternary structure, homohexameric ring arranged as a trimer of dimers.

It catalyses the reaction tRNA(n+1) + phosphate = tRNA(n) + a ribonucleoside 5'-diphosphate. Functionally, phosphorolytic 3'-5' exoribonuclease that plays an important role in tRNA 3'-end maturation. Removes nucleotide residues following the 3'-CCA terminus of tRNAs; can also add nucleotides to the ends of RNA molecules by using nucleoside diphosphates as substrates, but this may not be physiologically important. Probably plays a role in initiation of 16S rRNA degradation (leading to ribosome degradation) during starvation. The polypeptide is Ribonuclease PH (Histophilus somni (strain 129Pt) (Haemophilus somnus)).